The chain runs to 597 residues: Aspartate--tRNA(Asp/Asn) ligase (597 aa).

E182 lines the L-aspartate pocket. The tract at residues 206–209 (QLFK) is aspartate. R228 lines the L-aspartate pocket. Residues 228-230 (RDE) and Q237 each bind ATP. H456 contributes to the L-aspartate binding site. E490 provides a ligand contact to ATP. R497 provides a ligand contact to L-aspartate. Residue 542–545 (GFDR) coordinates ATP.

Belongs to the class-II aminoacyl-tRNA synthetase family. Type 1 subfamily. In terms of assembly, homodimer.

It localises to the cytoplasm. It catalyses the reaction tRNA(Asx) + L-aspartate + ATP = L-aspartyl-tRNA(Asx) + AMP + diphosphate. In terms of biological role, aspartyl-tRNA synthetase with relaxed tRNA specificity since it is able to aspartylate not only its cognate tRNA(Asp) but also tRNA(Asn). Reaction proceeds in two steps: L-aspartate is first activated by ATP to form Asp-AMP and then transferred to the acceptor end of tRNA(Asp/Asn). The chain is Aspartate--tRNA(Asp/Asn) ligase from Desulfatibacillum aliphaticivorans.